Here is a 179-residue protein sequence, read N- to C-terminus: Natural killer cells antigen CD94 (179 aa).

Residues M1 to R10 are Cytoplasmic-facing. Residues L11 to L31 form a helical; Signal-anchor for type II membrane protein membrane-spanning segment. Residues K32–I179 are Extracellular-facing. Cystine bridges form between C58-C70 and C61-C72. The C-type lectin domain maps to Y68–K175. Residues N83 and N132 are each glycosylated (N-linked (GlcNAc...) asparagine). Intrachain disulfides connect C89–C174 and C152–C166.

As to quaternary structure, can form disulfide-bonded heterodimer with NKG2 family members KLRC1 and KLRC2. KLRD1-KLRC1 heterodimer interacts with peptide-bound HLA-E-B2M heterotrimeric complex. KLRD1 plays a prominent role in directly interacting with HLA-E. KLRD1-KLRC1 interacts with much higher affinity with peptide-bound HLA-E-B2M than KLRD1-KLRC2. Interacts with the adapter protein TYROBP/DAP12; this interaction is required for cell surface expression and cell activation. As to expression, expressed in NK cell subsets (at protein level). Expressed in memory/effector CD8-positive alpha-beta T cell subsets (at protein level). Expressed in melanoma-specific cytotoxic T cell clones (at protein level). Expressed in terminally differentiated cytotoxic gamma-delta T cells (at protein level). KLRD1-KLRC1 and KLRD1-KLRC2 are differentially expressed in NK and T cell populations, with only minor subsets expressing both receptor complexes (at protein level).

It localises to the cell membrane. Immune receptor involved in self-nonself discrimination. In complex with KLRC1 or KLRC2 on cytotoxic and regulatory lymphocyte subsets, recognizes non-classical major histocompatibility (MHC) class Ib molecule HLA-E loaded with self-peptides derived from the signal sequence of classical MHC class Ia and non-classical MHC class Ib molecules. Enables cytotoxic cells to monitor the expression of MHC class I molecules in healthy cells and to tolerate self. Primarily functions as a ligand binding subunit as it lacks the capacity to signal. Its function is as follows. KLRD1-KLRC1 acts as an immune inhibitory receptor. Key inhibitory receptor on natural killer (NK) cells that regulates their activation and effector functions. Dominantly counteracts T cell receptor signaling on a subset of memory/effector CD8-positive T cells as part of an antigen-driven response to avoid autoimmunity. On intraepithelial CD8-positive gamma-delta regulatory T cells triggers TGFB1 secretion, which in turn limits the cytotoxic programming of intraepithelial CD8-positive alpha-beta T cells, distinguishing harmless from pathogenic antigens. In HLA-E-rich tumor microenvironment, acts as an immune inhibitory checkpoint and may contribute to progressive loss of effector functions of NK cells and tumor-specific T cells, a state known as cell exhaustion. Upon HLA-E-peptide binding, transmits intracellular signals through KLRC1 immunoreceptor tyrosine-based inhibition motifs (ITIMs) by recruiting INPP5D/SHIP-1 and INPPL1/SHIP-2 tyrosine phosphatases to ITIMs, and ultimately opposing signals transmitted by activating receptors through dephosphorylation of proximal signaling molecules. Functionally, KLRD1-KLRC2 acts as an immune activating receptor. On cytotoxic lymphocyte subsets recognizes HLA-E loaded with signal sequence-derived peptides from non-classical MHC class Ib HLA-G molecules, likely playing a role in the generation and effector functions of adaptive NK cells and in maternal-fetal tolerance during pregnancy. Regulates the effector functions of terminally differentiated cytotoxic lymphocyte subsets, and in particular may play a role in adaptive NK cell response to viral infection. Upon HLA-E-peptide binding, transmits intracellular signals via the adapter protein TYROBP/DAP12, triggering the phosphorylation of proximal signaling molecules and cell activation. In terms of biological role, (Microbial infection) Viruses like human cytomegalovirus have evolved an escape mechanism whereby virus-induced down-regulation of host MHC class I molecules is coupled to the binding of viral peptides to HLA-E, restoring HLA-E expression and inducing HLA-E-dependent NK cell immune tolerance to infected cells. Recognizes HLA-E in complex with human cytomegalovirus UL40-derived peptide (VMAPRTLIL) and inhibits NK cell cytotoxicity. (Microbial infection) May recognize HLA-E in complex with HIV-1 gag/Capsid protein p24-derived peptide (AISPRTLNA) on infected cells and may inhibit NK cell cytotoxicity, a mechanism that allows HIV-1 to escape immune recognition. Its function is as follows. (Microbial infection) Upon SARS-CoV-2 infection, may contribute to functional exhaustion of cytotoxic NK cells and CD8-positive T cells. On NK cells, may recognize HLA-E in complex with SARS-CoV-2 S/Spike protein S1-derived peptide (LQPRTFLL) expressed on the surface of lung epithelial cells, inducing NK cell exhaustion and dampening antiviral immune surveillance. The sequence is that of Natural killer cells antigen CD94 (KLRD1) from Homo sapiens (Human).